The following is a 138-amino-acid chain: uncharacterized protein (138 aa).

Residues Met-1–Ala-37 form the signal peptide.

The protein to H.influenzae HI_1631.

This is an uncharacterized protein from Sinorhizobium fredii (strain NBRC 101917 / NGR234).